We begin with the raw amino-acid sequence, 447 residues long: MKRKRAIIQHILSEKRRIEKIKEGDSMAGKDDFGTTKYIIYAEFEANGVVERPDVVGAIFGQTEGLLGDDLDLRELQKTGRIGRIKVEVHTKAGKSYGTILVPSSLDRVETAIIAAALETIDRVGPCEAKIRVVKIEDVRASKRKYIIERAKEILETLIEEEIPETQELVEEVRKAVREMELIEYGPEKLPAGPHVPFSDSIIVVEGRADVLNLLRHGIKNAIAVEGTSIPETIIKLSKERIVTAFTDGDRGGELILKELLQVADIDYVARAPEGKEVEELTKKEIIKALRSKVPAEEVYNELFNKGKSFYEIVKEREGKVKEEKPEKEVQQPKPQVKANEKIVKPLPVPKQDYRGFEEFVERVKNSQDPIALLLDENKNVIAEVHTRDLLSAIDENDGVYAVIFNGIITQRLIDVVSEKGVRYLIGAKKANVVRRPVTLKVITFAE.

Residues 200–274 enclose the Toprim domain; that stretch reads DSIIVVEGRA…DIDYVARAPE (75 aa). Mg(2+)-binding residues include glutamate 206, aspartate 248, and aspartate 250.

This sequence belongs to the archaeal DnaG primase family. As to quaternary structure, forms a ternary complex with MCM helicase and DNA. Component of the archaeal exosome complex. Mg(2+) serves as cofactor.

It carries out the reaction ssDNA + n NTP = ssDNA/pppN(pN)n-1 hybrid + (n-1) diphosphate.. RNA polymerase that catalyzes the synthesis of short RNA molecules used as primers for DNA polymerase during DNA replication. Also part of the exosome, which is a complex involved in RNA degradation. Acts as a poly(A)-binding protein that enhances the interaction between heteromeric, adenine-rich transcripts and the exosome. This is DNA primase DnaG from Pyrococcus abyssi (strain GE5 / Orsay).